Here is a 198-residue protein sequence, read N- to C-terminus: MPNWRDQYLSGIKDAELNNPVNMELVQTCSQMADRISALEAEKNGLETLVTTNGKTTARPTEPSTNDPAVAQLKQDLAEALRSKGVAEKRLRSSEEELLQLRSKHKTNTRSIRDLTADKNSLTTRLKDREYELREKRKFIEQVQDEMIALNLQMSMAEKERDKVKKENKELVDRWMKRMAQEAEAMNLANEPIFKKGR.

Residues 24-177 (ELVQTCSQMA…NKELVDRWMK (154 aa)) adopt a coiled-coil conformation.

The protein belongs to the ATG16 family. As to quaternary structure, homodimer. Part of the ATG5-ATG12/ATG16 complex. Several units of each may be present in this complex. Interacts directly with ATG12.

The protein localises to the preautophagosomal structure membrane. In terms of biological role, stabilizes the ATG5-ATG12 conjugate. The ATG5-ATG12/ATG16 complex is required for efficient promotion of ATG8-conjugation to phosphatidylethanolamine and ATG8 localization to the pre-autophagosomal structure (PAS). Also recruits ATG3 to the PAS. Involved in endoplasmic reticulum-specific autophagic process and is essential for the survival of cells subjected to severe ER stress. Autophagy is required for proper vegetative growth, asexual/sexual reproduction, and full virulence. Autophagy is particularly involved in the biosynthesis of deoxynivalenol (DON), an important virulence determinant. This chain is Autophagy-related protein 16, found in Gibberella zeae (strain ATCC MYA-4620 / CBS 123657 / FGSC 9075 / NRRL 31084 / PH-1) (Wheat head blight fungus).